A 196-amino-acid polypeptide reads, in one-letter code: dTDP-4-dehydro-6-deoxyglucose 3-epimerase (196 aa).

Substrate-binding positions include R21, E26, 45–47 (QVN), and R57. The active-site Proton acceptor is the H60. Positions 70 and 117 each coordinate substrate. Y130 (proton donor) is an active-site residue. Substrate-binding residues include E141 and R166.

Belongs to the dTDP-4-dehydrorhamnose 3,5-epimerase family. As to quaternary structure, homodimer.

It carries out the reaction dTDP-4-dehydro-6-deoxy-alpha-D-glucose = dTDP-4-dehydro-6-deoxy-alpha-D-allose. Its pathway is antibiotic biosynthesis. Its function is as follows. Involved in the biosynthesis of dTDP-6-deoxy-D-allose, an intermediate in the biosynthesis of mycinose, which is one of the two unusual sugars attached to the 16-membered macrolactone ring of the aglycone antibiotic chalcomycin. Catalyzes the conversion of dTDP-4-oxo-6-deoxyglucose to dTDP-4-oxo-6-deoxyallose, via a C-3 epimerization. This Streptomyces bikiniensis protein is dTDP-4-dehydro-6-deoxyglucose 3-epimerase.